A 242-amino-acid chain; its full sequence is UPF0246 protein SPD_1378 (242 aa).

It belongs to the UPF0246 family.

The protein is UPF0246 protein SPD_1378 of Streptococcus pneumoniae serotype 2 (strain D39 / NCTC 7466).